The following is a 238-amino-acid chain: Uridylate kinase (238 aa).

12-15 contacts ATP; that stretch reads KLSG. Position 54 (Gly-54) interacts with UMP. 2 residues coordinate ATP: Gly-55 and Arg-59. Residues Asp-74 and 135–142 contribute to the UMP site; that span reads TGNPFFTT. Residues Thr-162, Tyr-168, and Asp-171 each coordinate ATP.

Belongs to the UMP kinase family. As to quaternary structure, homohexamer.

Its subcellular location is the cytoplasm. It catalyses the reaction UMP + ATP = UDP + ADP. It participates in pyrimidine metabolism; CTP biosynthesis via de novo pathway; UDP from UMP (UMPK route): step 1/1. Inhibited by UTP. Catalyzes the reversible phosphorylation of UMP to UDP. This is Uridylate kinase from Nitrosospira multiformis (strain ATCC 25196 / NCIMB 11849 / C 71).